A 269-amino-acid chain; its full sequence is Formamidopyrimidine-DNA glycosylase (269 aa).

Residue Pro-2 is the Schiff-base intermediate with DNA of the active site. Residue Glu-3 is the Proton donor of the active site. Residue Lys-57 is the Proton donor; for beta-elimination activity of the active site. Residues His-90, Arg-109, and Lys-150 each coordinate DNA. The segment at 235-269 adopts an FPG-type zinc-finger fold; that stretch reads FVYGRAGEPCRICGEQIESIKLGQRSTFFCRHCQY. Arg-259 acts as the Proton donor; for delta-elimination activity in catalysis.

This sequence belongs to the FPG family. In terms of assembly, monomer. Zn(2+) serves as cofactor.

The enzyme catalyses Hydrolysis of DNA containing ring-opened 7-methylguanine residues, releasing 2,6-diamino-4-hydroxy-5-(N-methyl)formamidopyrimidine.. It catalyses the reaction 2'-deoxyribonucleotide-(2'-deoxyribose 5'-phosphate)-2'-deoxyribonucleotide-DNA = a 3'-end 2'-deoxyribonucleotide-(2,3-dehydro-2,3-deoxyribose 5'-phosphate)-DNA + a 5'-end 5'-phospho-2'-deoxyribonucleoside-DNA + H(+). Functionally, involved in base excision repair of DNA damaged by oxidation or by mutagenic agents. Acts as a DNA glycosylase that recognizes and removes damaged bases. Has a preference for oxidized purines, such as 7,8-dihydro-8-oxoguanine (8-oxoG). Has AP (apurinic/apyrimidinic) lyase activity and introduces nicks in the DNA strand. Cleaves the DNA backbone by beta-delta elimination to generate a single-strand break at the site of the removed base with both 3'- and 5'-phosphates. The protein is Formamidopyrimidine-DNA glycosylase of Photorhabdus laumondii subsp. laumondii (strain DSM 15139 / CIP 105565 / TT01) (Photorhabdus luminescens subsp. laumondii).